Here is a 545-residue protein sequence, read N- to C-terminus: Ubiquitin carboxyl-terminal hydrolase 17-like protein C (545 aa).

Positions 51 to 348 constitute a USP domain; that stretch reads CGLQNTGNSC…NAYVLFYVQQ (298 aa). Cysteine 60 (nucleophile) is an active-site residue. The active-site Proton acceptor is the histidine 307. Disordered regions lie at residues 368–442 and 489–539; these read DPEY…QKLG and WGRD…KQGQ. The span at 374–385 shows a compositional bias: basic residues; that stretch reads KKSRRKKHKKKS. Composition is skewed to basic and acidic residues over residues 393-404 and 489-505; these read EPCKNREKRATK and WGRD…HNAD. Polar residues predominate over residues 508 to 519; the sequence is LTSQDPVNTGQL. The segment covering 524–537 has biased composition (basic residues); sequence GRRRSKKGKNKNKQ.

This sequence belongs to the peptidase C19 family. USP17 subfamily. In terms of tissue distribution, expressed in T cells.

The protein localises to the nucleus. It is found in the endoplasmic reticulum. The enzyme catalyses Thiol-dependent hydrolysis of ester, thioester, amide, peptide and isopeptide bonds formed by the C-terminal Gly of ubiquitin (a 76-residue protein attached to proteins as an intracellular targeting signal).. Deubiquitinating enzyme that removes conjugated ubiquitin from specific proteins to regulate different cellular processes. Important for preimplantation stage embryonic development. In Mus musculus (Mouse), this protein is Ubiquitin carboxyl-terminal hydrolase 17-like protein C.